A 347-amino-acid chain; its full sequence is Quinolinate synthase (347 aa).

Residues H47 and S68 each contribute to the iminosuccinate site. C113 contributes to the [4Fe-4S] cluster binding site. Iminosuccinate is bound by residues Y139 to N141 and S156. Position 200 (C200) interacts with [4Fe-4S] cluster. Iminosuccinate-binding positions include H226–E228 and T243. [4Fe-4S] cluster is bound at residue C297.

It belongs to the quinolinate synthase family. Type 1 subfamily. [4Fe-4S] cluster serves as cofactor.

The protein resides in the cytoplasm. It carries out the reaction iminosuccinate + dihydroxyacetone phosphate = quinolinate + phosphate + 2 H2O + H(+). It functions in the pathway cofactor biosynthesis; NAD(+) biosynthesis; quinolinate from iminoaspartate: step 1/1. Functionally, catalyzes the condensation of iminoaspartate with dihydroxyacetone phosphate to form quinolinate. The sequence is that of Quinolinate synthase from Enterobacter sp. (strain 638).